Consider the following 188-residue polypeptide: Augmin complex subunit dgt4 (188 aa).

A coiled-coil region spans residues 141–163; sequence QREFAQNQEALRSLRTAVDGLEN.

Component of the augmin complex composed of dgt2, dgt3, dgt4, dgt5, dgt6, msd1, msd5 and wac. The complex interacts directly or indirectly with microtubules and is required for centrosome-independent generation of spindle microtubules.

Its subcellular location is the cytoplasm. It localises to the cytoskeleton. The protein resides in the spindle. In terms of biological role, as part of the augmin complex, plays a role in centrosome-independent generation of spindle microtubules. The complex is required for mitotic spindle assembly through its involvement in localizing gamma-tubulin to spindle microtubules. The protein is Augmin complex subunit dgt4 of Drosophila melanogaster (Fruit fly).